A 66-amino-acid chain; its full sequence is Large ribosomal subunit protein bL35 (66 aa).

Positions 1 to 44 (MPKLKSHRGAAKRFRKTASGAIKRRGAYRNHILTKKSTKQKRHL) are enriched in basic residues. Positions 1-48 (MPKLKSHRGAAKRFRKTASGAIKRRGAYRNHILTKKSTKQKRHLRVEA) are disordered.

This sequence belongs to the bacterial ribosomal protein bL35 family.

The sequence is that of Large ribosomal subunit protein bL35 from Legionella pneumophila (strain Corby).